We begin with the raw amino-acid sequence, 1893 residues long: Transcription initiation factor TFIID subunit 1 (1893 aa).

Positions 1 to 435 constitute a Protein kinase 1 domain; the sequence is MGPGCDLLLR…VTQLHWEDDI (435 aa). Serine 137 is subject to Phosphoserine; by autocatalysis. 2 disordered regions span residues 155–184 and 197–224; these read LMPP…NGEG and ASEK…AESE. The segment covering 156–165 has biased composition (pro residues); that stretch reads MPPPPPPPGP. The segment covering 197–208 has biased composition (low complexity); that stretch reads ASEKVDFSSSSD. Phosphoserine; by autocatalysis is present on serine 328. A disordered region spans residues 534 to 557; sequence IPDEKEEATSNSPSKESKKESSLK. The histone acetyltransferase (HAT) stretch occupies residues 538 to 997; the sequence is KEEATSNSPS…KIPNKPTQQK (460 aa). Residue lysine 565 is modified to N6-acetyllysine. Glycyl lysine isopeptide (Lys-Gly) (interchain with G-Cter in SUMO2) cross-links involve residues lysine 570 and lysine 583. Disordered stretches follow at residues 990 to 1009, 1128 to 1148, 1158 to 1177, and 1254 to 1278; these read PNKP…KKTV, MLQN…QERK, GSAA…VTSL, and RLKR…MKER. Composition is skewed to basic and acidic residues over residues 995-1004 and 1139-1148; these read QQKDDKEPQP and SREREEQERK. The segment at residues 1216–1294 is a DNA-binding region (HMG box; involved in promoter binding); the sequence is VRIRTTKDEE…CGACGAIGHM (79 aa). The span at 1254–1270 shows a compositional bias: basic and acidic residues; that stretch reads RLKRNQEKEKLKGPPEK. Positions 1363–1650 are interaction with ASF1A and ASF1B; sequence VLKFPKQQLP…TAKEAALEEA (288 aa). A Nuclear localization signal motif is present at residues 1372–1379; it reads PPKKKRRV. Bromo domains lie at 1397–1505 and 1519–1628; these read RRRT…LKEK and LLDD…LTEY. The Protein kinase 2 domain maps to 1446–1893; sequence MDLQTLRENV…AGDSDLDSDE (448 aa). A disordered region spans residues 1651–1676; it reads ELESLDPMTPGPYTPQPPDLYDTNTS. Positions 1659–1668 are enriched in pro residues; it reads TPGPYTPQPP. A phosphoserine mark is found at serine 1690, serine 1693, alanine 1718, glutamate 1721, and glycine 1723. The tract at residues 1696 to 1893 is disordered; it reads DIPSATPEKQ…AGDSDLDSDE (198 aa). 2 stretches are compositionally biased toward acidic residues: residues 1709–1723 and 1741–1756; these read EGED…EEEG and EGED…EEGD. Phosphoserine is present on residues serine 1799, serine 1802, and serine 1820. Over residues 1830–1840 the composition is skewed to polar residues; the sequence is KSNTQDTSFSS. A compositionally biased stretch (acidic residues) spans 1846-1857; it reads VSEEEEDEEEEE. Serine 1847 bears the Phosphoserine mark. Residues 1860–1869 show a composition bias toward polar residues; that stretch reads SGPSVLSQVH.

Belongs to the TAF1 family. As to quaternary structure, component of the TFIID basal transcription factor complex, composed of TATA-box-binding protein TBP, and a number of TBP-associated factors (TAFs), including TAF1, TAF2, TAF3, TAF4, TAF5, TAF6, TAF7, TAF8, TAF9, TAF10, TAF11, TAF12 and TAF13. Interacts with TAF7; the interaction is direct. TAF1, when part of the TFIID complex, interacts with C-terminus of TP53. Part of a TFIID-containing RNA polymerase II pre-initiation complex that is composed of TBP and at least GTF2A1, GTF2A2, GTF2E1, GTF2E2, GTF2F1, GTF2H2, GTF2H3, GTF2H4, GTF2H5, GTF2B, TCEA1, ERCC2, ERCC3, TAF1, TAF2, TAF3, TAF4, TAF5, TAF6, TAF7, TAF8, TAF9, TAF10, TAF11, TAF12 and TAF13. Component of some MLL1/MLL complex, at least composed of the core components KMT2A/MLL1, ASH2L, HCFC1/HCF1, WDR5 and RBBP5, as well as the facultative components BACC1, CHD8, E2F6, HSP70, INO80C, KANSL1, LAS1L, MAX, MCRS1, MGA, KAT8/MOF, PELP1, PHF20, PRP31, RING2, RUVB1/TIP49A, RUVB2/TIP49B, SENP3, TAF1, TAF4, TAF6, TAF7, TAF9 and TEX10. RB1 interacts with the N-terminal domain of TAF1. Interacts with ASF1A and ASF1B. Interacts (via bromo domains) with acetylated lysine residues on the N-terminus of histone H1.4, H2A, H2B, H3 and H4 (in vitro). In terms of assembly, (Microbial infection) Interacts with SV40 Large T antigen. (Microbial infection) Interacts with herpes simplex virus 1 ICP4. The cofactor is Mg(2+). Phosphorylated by casein kinase II in vitro.

It is found in the nucleus. The catalysed reaction is L-seryl-[protein] + ATP = O-phospho-L-seryl-[protein] + ADP + H(+). It carries out the reaction L-threonyl-[protein] + ATP = O-phospho-L-threonyl-[protein] + ADP + H(+). The enzyme catalyses L-lysyl-[protein] + acetyl-CoA = N(6)-acetyl-L-lysyl-[protein] + CoA + H(+). With respect to regulation, autophosphorylates on Ser residues. Inhibited by retinoblastoma tumor suppressor protein, RB1. Binding to TAF7 or CIITA inhibits the histone acetyltransferase activity. Its function is as follows. The TFIID basal transcription factor complex plays a major role in the initiation of RNA polymerase II (Pol II)-dependent transcription. TFIID recognizes and binds promoters with or without a TATA box via its subunit TBP, a TATA-box-binding protein, and promotes assembly of the pre-initiation complex (PIC). The TFIID complex consists of TBP and TBP-associated factors (TAFs), including TAF1, TAF2, TAF3, TAF4, TAF5, TAF6, TAF7, TAF8, TAF9, TAF10, TAF11, TAF12 and TAF13. TAF1 is the largest component and core scaffold of the TFIID complex, involved in nucleating complex assembly. TAF1 forms a promoter DNA binding subcomplex of TFIID, together with TAF7 and TAF2. Contains novel N- and C-terminal Ser/Thr kinase domains which can autophosphorylate or transphosphorylate other transcription factors. Phosphorylates TP53 on 'Thr-55' which leads to MDM2-mediated degradation of TP53. Phosphorylates GTF2A1 and GTF2F1 on Ser residues. Possesses DNA-binding activity. Essential for progression of the G1 phase of the cell cycle. Exhibits histone acetyltransferase activity towards histones H3 and H4. In Homo sapiens (Human), this protein is Transcription initiation factor TFIID subunit 1.